Here is a 465-residue protein sequence, read N- to C-terminus: Sodium-dependent phosphate transport protein 1 (465 aa).

Asn47 and Asn56 each carry an N-linked (GlcNAc...) asparagine glycan. The next 10 membrane-spanning stretches (helical) occupy residues Gly79–Ile99, Ile109–Val129, Met171–Cys191, Met198–Tyr218, Ala255–Thr275, Leu304–Met324, Leu337–Ser357, Thr363–Ile383, Val399–Leu419, and Phe428–Phe448.

Belongs to the major facilitator superfamily. Sodium/anion cotransporter family. Interacts with PDZK1. Kidney cortex and liver.

It localises to the apical cell membrane. It catalyses the reaction 3 Na(+)(out) + phosphate(out) = 3 Na(+)(in) + phosphate(in). The catalysed reaction is urate(out) = urate(in). Important for the resorption of phosphate by the kidney. May be involved in actively transporting phosphate into cells via Na(+) cotransport in the renal brush border membrane. Plays a role in urate transport in the kidney. In Oryctolagus cuniculus (Rabbit), this protein is Sodium-dependent phosphate transport protein 1 (SLC17A1).